The chain runs to 511 residues: UDP-N-acetylmuramoyl-L-alanyl-D-glutamate--2,6-diaminopimelate ligase (511 aa).

A UDP-N-acetyl-alpha-D-muramoyl-L-alanyl-D-glutamate-binding site is contributed by serine 33. Glycine 118–threonine 124 provides a ligand contact to ATP. UDP-N-acetyl-alpha-D-muramoyl-L-alanyl-D-glutamate-binding positions include threonine 160–threonine 161, serine 187, glutamine 193, and arginine 195. Lysine 227 is modified (N6-carboxylysine). Meso-2,6-diaminopimelate contacts are provided by residues arginine 403, aspartate 427 to arginine 430, glycine 478, and glutamate 482. A Meso-diaminopimelate recognition motif motif is present at residues aspartate 427–arginine 430.

Belongs to the MurCDEF family. MurE subfamily. The cofactor is Mg(2+). Carboxylation is probably crucial for Mg(2+) binding and, consequently, for the gamma-phosphate positioning of ATP.

The protein resides in the cytoplasm. It catalyses the reaction UDP-N-acetyl-alpha-D-muramoyl-L-alanyl-D-glutamate + meso-2,6-diaminopimelate + ATP = UDP-N-acetyl-alpha-D-muramoyl-L-alanyl-gamma-D-glutamyl-meso-2,6-diaminopimelate + ADP + phosphate + H(+). It participates in cell wall biogenesis; peptidoglycan biosynthesis. Its function is as follows. Catalyzes the addition of meso-diaminopimelic acid to the nucleotide precursor UDP-N-acetylmuramoyl-L-alanyl-D-glutamate (UMAG) in the biosynthesis of bacterial cell-wall peptidoglycan. In Prochlorococcus marinus subsp. pastoris (strain CCMP1986 / NIES-2087 / MED4), this protein is UDP-N-acetylmuramoyl-L-alanyl-D-glutamate--2,6-diaminopimelate ligase.